The chain runs to 349 residues: 5-deoxyribose 1-phosphate isomerase (349 aa).

Substrate-binding positions include 49–51 (RGA), arginine 92, and glutamine 199. Catalysis depends on aspartate 240, which acts as the Proton donor. A substrate-binding site is contributed by 250-251 (NK).

The protein belongs to the EIF-2B alpha/beta/delta subunits family. DrdI subfamily.

It catalyses the reaction 5-deoxy-alpha-D-ribose 1-phosphate = 5-deoxy-D-ribulose 1-phosphate. The protein operates within carbohydrate degradation. Its function is as follows. Catalyzes the isomerization of 5-deoxy-alpha-D-ribose 1-phosphate to 5-deoxy-D-ribulose 1-phosphate, as part of a 5-deoxyribose salvage pathway that recycles this toxic radical SAM enzyme by-product to mainstream metabolites. This Clostridium botulinum (strain Loch Maree / Type A3) protein is 5-deoxyribose 1-phosphate isomerase.